A 1070-amino-acid polypeptide reads, in one-letter code: DNA-directed RNA polymerase subunit beta (1070 aa).

This sequence belongs to the RNA polymerase beta chain family. In terms of assembly, in plastids the minimal PEP RNA polymerase catalytic core is composed of four subunits: alpha, beta, beta', and beta''. When a (nuclear-encoded) sigma factor is associated with the core the holoenzyme is formed, which can initiate transcription.

The protein resides in the plastid. The protein localises to the chloroplast. It catalyses the reaction RNA(n) + a ribonucleoside 5'-triphosphate = RNA(n+1) + diphosphate. DNA-dependent RNA polymerase catalyzes the transcription of DNA into RNA using the four ribonucleoside triphosphates as substrates. This is DNA-directed RNA polymerase subunit beta from Angiopteris evecta (Mule's foot fern).